We begin with the raw amino-acid sequence, 542 residues long: Esterase S (542 aa).

An N-terminal signal peptide occupies residues 1 to 22; the sequence is MTQILLPIALLCLFAASTLSNP. A disulfide bridge connects residues Cys-81 and Cys-100. Asn-110 carries an N-linked (GlcNAc...) asparagine glycan. The active-site Acyl-ester intermediate is the Ser-204. Cysteines 256 and 268 form a disulfide. Residue Asn-396 is glycosylated (N-linked (GlcNAc...) asparagine). Cysteines 507 and 528 form a disulfide.

This sequence belongs to the type-B carboxylesterase/lipase family. Monomer. Specifically expressed in the ejaculatory bulbs of male.

The protein localises to the secreted. It carries out the reaction a carboxylic ester + H2O = an alcohol + a carboxylate + H(+). In terms of biological role, transferred from the ejaculatory bulbs of males to the female genitals upon copulation, plays an important role in the reproductive biology. This Drosophila virilis (Fruit fly) protein is Esterase S (EstS).